The primary structure comprises 598 residues: DNA polymerase alpha subunit B (598 aa).

A compositionally biased stretch (polar residues) spans 112 to 140 (SYTTPSKGSQKRAISTPETPLTKRSVSTR). The interval 112-167 (SYTTPSKGSQKRAISTPETPLTKRSVSTRSPHQLLSPSSFSPSATPSQKYNSRSNR) is disordered. Ser-126 is modified (phosphoserine). Residues Thr-127 and Thr-130 each carry the phosphothreonine modification. 4 positions are modified to phosphoserine: Ser-141, Ser-147, Ser-152, and Ser-154. A compositionally biased stretch (low complexity) spans 141 to 158 (SPHQLLSPSSFSPSATPS).

This sequence belongs to the DNA polymerase alpha subunit B family. Component of the alpha DNA polymerase complex (also known as the alpha DNA polymerase-primase complex) consisting of four subunits: the catalytic subunit POLA1, the regulatory subunit POLA2, and primase complex subunits PRIM1 and PRIM2 respectively. Within the complex, POLA1 directly interacts with PRIM2/p58. Phosphorylated in a cell cycle-dependent manner, in G2/M phase.

It localises to the nucleus. Accessory subunit of the DNA polymerase alpha complex (also known as the alpha DNA polymerase-primase complex) which plays an essential role in the initiation of DNA synthesis. During the S phase of the cell cycle, the DNA polymerase alpha complex (composed of a catalytic subunit POLA1, an accessory subunit POLA2 and two primase subunits, the catalytic subunit PRIM1 and the regulatory subunit PRIM2) is recruited to DNA at the replicative forks via direct interactions with MCM10 and WDHD1. The primase subunit of the polymerase alpha complex initiates DNA synthesis by oligomerising short RNA primers on both leading and lagging strands. These primers are initially extended by the polymerase alpha catalytic subunit and subsequently transferred to polymerase delta and polymerase epsilon for processive synthesis on the lagging and leading strand, respectively. The polypeptide is DNA polymerase alpha subunit B (POLA2) (Homo sapiens (Human)).